A 257-amino-acid polypeptide reads, in one-letter code: Imidazole glycerol phosphate synthase subunit HisF (257 aa).

Active-site residues include D12 and D131.

The protein belongs to the HisA/HisF family. Heterodimer of HisH and HisF.

The protein localises to the cytoplasm. It catalyses the reaction 5-[(5-phospho-1-deoxy-D-ribulos-1-ylimino)methylamino]-1-(5-phospho-beta-D-ribosyl)imidazole-4-carboxamide + L-glutamine = D-erythro-1-(imidazol-4-yl)glycerol 3-phosphate + 5-amino-1-(5-phospho-beta-D-ribosyl)imidazole-4-carboxamide + L-glutamate + H(+). Its pathway is amino-acid biosynthesis; L-histidine biosynthesis; L-histidine from 5-phospho-alpha-D-ribose 1-diphosphate: step 5/9. Its function is as follows. IGPS catalyzes the conversion of PRFAR and glutamine to IGP, AICAR and glutamate. The HisF subunit catalyzes the cyclization activity that produces IGP and AICAR from PRFAR using the ammonia provided by the HisH subunit. In Burkholderia lata (strain ATCC 17760 / DSM 23089 / LMG 22485 / NCIMB 9086 / R18194 / 383), this protein is Imidazole glycerol phosphate synthase subunit HisF.